Reading from the N-terminus, the 345-residue chain is Transmembrane protein 144 homolog (345 aa).

10 consecutive transmembrane segments (helical) span residues Ile3 to Pro23, Gly32 to Ser52, Pro61 to Met81, Ile84 to Ala104, Pro120 to Ile140, Leu193 to Ile213, Val233 to Ile253, Leu265 to Val285, Ala293 to Phe313, and Leu324 to Ser344.

This sequence belongs to the TMEM144 family.

The protein localises to the membrane. The protein is Transmembrane protein 144 homolog of Caenorhabditis elegans.